The primary structure comprises 414 residues: 3-isopropylmalate dehydratase large subunit (414 aa).

3 residues coordinate [4Fe-4S] cluster: Cys295, Cys353, and Cys356.

It belongs to the aconitase/IPM isomerase family. LeuC type 2 subfamily. As to quaternary structure, heterodimer of LeuC and LeuD. The cofactor is [4Fe-4S] cluster.

The catalysed reaction is (2R,3S)-3-isopropylmalate = (2S)-2-isopropylmalate. Its pathway is amino-acid biosynthesis; L-leucine biosynthesis; L-leucine from 3-methyl-2-oxobutanoate: step 2/4. Catalyzes the isomerization between 2-isopropylmalate and 3-isopropylmalate, via the formation of 2-isopropylmaleate. The chain is 3-isopropylmalate dehydratase large subunit from Pyrobaculum islandicum (strain DSM 4184 / JCM 9189 / GEO3).